A 413-amino-acid chain; its full sequence is Ribulose bisphosphate carboxylase large chain (413 aa).

Asn100 and Thr150 together coordinate substrate. Lys152 acts as the Proton acceptor in catalysis. Lys154 lines the substrate pocket. Lys178, Asp180, and Glu181 together coordinate Mg(2+). At Lys178 the chain carries N6-carboxylysine. The active-site Proton acceptor is His271. Arg272, His304, and Ser356 together coordinate substrate.

Belongs to the RuBisCO large chain family. Type I subfamily. Heterohexadecamer of 8 large chains and 8 small chains; disulfide-linked. The disulfide link is formed within the large subunit homodimers. It depends on Mg(2+) as a cofactor. In terms of processing, the disulfide bond which can form in the large chain dimeric partners within the hexadecamer appears to be associated with oxidative stress and protein turnover.

It localises to the plastid. Its subcellular location is the chloroplast. It catalyses the reaction 2 (2R)-3-phosphoglycerate + 2 H(+) = D-ribulose 1,5-bisphosphate + CO2 + H2O. The catalysed reaction is D-ribulose 1,5-bisphosphate + O2 = 2-phosphoglycolate + (2R)-3-phosphoglycerate + 2 H(+). Functionally, ruBisCO catalyzes two reactions: the carboxylation of D-ribulose 1,5-bisphosphate, the primary event in carbon dioxide fixation, as well as the oxidative fragmentation of the pentose substrate in the photorespiration process. Both reactions occur simultaneously and in competition at the same active site. The sequence is that of Ribulose bisphosphate carboxylase large chain (rbcL) from Adiantum pedatum (Northern maidenhair fern).